Here is an 803-residue protein sequence, read N- to C-terminus: Rho guanine nucleotide exchange factor 7 (803 aa).

Methionine 1 is subject to N-acetylmethionine. The Calponin-homology (CH) domain maps to 1 to 133 (MNSAEQTVTW…SLVTLNKVTA (133 aa)). The residue at position 2 (asparagine 2) is an N-acetylthreonine. 2 positions are modified to phosphoserine: serine 153 and serine 176. The SH3 domain occupies 184–243 (NNQLVVRAKFNFQQTNEDELSFSKGDVIHVTRVEEGGWWEGTLNGRTGWFPSNYVREVKA). Phosphoserine is present on residues serine 249 and serine 257. In terms of domain architecture, DH spans 271–451 (YYNVVLQNIL…KNLSAQCQEV (181 aa)). Residues 473–578 (DIKTLGNVTY…WVEHLQKQTK (106 aa)) form the PH domain. Residues serine 518, cysteine 560, and valine 579 each carry the phosphoserine modification. Residues 580–655 (TSVGNPTIKP…TPKPWSLSCL (76 aa)) form a disordered region. Residues 593–606 (PSHTLPSHPVTPSS) show a composition bias toward polar residues. A phosphoserine mark is found at lysine 645 and serine 664. Positions 678–690 (KTMKKLLPKRKPE) are enriched in basic residues. Disordered regions lie at residues 678 to 704 (KTMK…RKST) and 748 to 773 (DDQP…LSED). Positions 691–700 (RKPSDEEFAS) are enriched in basic and acidic residues. Serine 694 is modified (phosphoserine; by CaMK1). Low complexity predominate over residues 752 to 765 (SLDSLGRRSSLSRL).

As to quaternary structure, interacts with PAK kinases through the SH3 domain. Interacts with GIT1 and TGFB1I1. Interacts with PTK2/FAK1 and RAC1. Interacts with ITCH and PARVB. Interacts with unphosphorylated PAK1. Interacts with SCRIB; interaction is direct and may play a role in regulation of apoptosis. Interacts with FRMPD4 (via N-terminus). Interacts with CaMK1. Interacts with BIN2. Interacts with YWHAZ. Interacts (via PH domain) with NOX1 (via FAD-binding FR-type domain). Interacts with SNX27. In terms of processing, phosphorylated by PTK2/FAK1; this promotes interaction with RAC1. Phosphorylated on Ser-694 by CaMK1; enhancement of GEF activity and downstream activation of RAC1.

Its subcellular location is the cell junction. The protein localises to the focal adhesion. It is found in the cell projection. The protein resides in the ruffle. It localises to the cytoplasm. Its subcellular location is the cell cortex. The protein localises to the lamellipodium. Functionally, acts as a RAC1 guanine nucleotide exchange factor (GEF) and can induce membrane ruffling. Functions in cell migration, attachment and cell spreading. Promotes targeting of RAC1 to focal adhesions. May function as a positive regulator of apoptosis. Downstream of NMDA receptors and CaMKK-CaMK1 signaling cascade, promotes the formation of spines and synapses in hippocampal neurons. The polypeptide is Rho guanine nucleotide exchange factor 7 (ARHGEF7) (Homo sapiens (Human)).